A 461-amino-acid chain; its full sequence is Cysteine--tRNA ligase (461 aa).

Position 28 (Cys-28) interacts with Zn(2+). The short motif at 30 to 40 (VTIYDLCHIGH) is the 'HIGH' region element. Zn(2+)-binding residues include Cys-209, His-234, and Glu-238. Residues 266-270 (KMSKS) carry the 'KMSKS' region motif. Lys-269 serves as a coordination point for ATP.

This sequence belongs to the class-I aminoacyl-tRNA synthetase family. Monomer. It depends on Zn(2+) as a cofactor.

It is found in the cytoplasm. It carries out the reaction tRNA(Cys) + L-cysteine + ATP = L-cysteinyl-tRNA(Cys) + AMP + diphosphate. This Serratia proteamaculans (strain 568) protein is Cysteine--tRNA ligase.